The following is a 504-amino-acid chain: Maturase K (504 aa).

The protein belongs to the intron maturase 2 family. MatK subfamily.

It localises to the plastid. It is found in the chloroplast. Usually encoded in the trnK tRNA gene intron. Probably assists in splicing its own and other chloroplast group II introns. This is Maturase K from Fagus japonica (Japanese beech).